Here is a 266-residue protein sequence, read N- to C-terminus: MKLSLSPPPYADAPVVVLISGLGGSGSYWLPQLAVLEQEYQVVCYDQRGTGNNPDTLAEDYSITQMAAELHQALVAAGIERYAVVGHALGALVGMQLALDYPASVTVLISVNGWLRINAHTRRCFQVRERLLYSGGAQAWVEAQPLFLYPADWMAARAPRLEAEDALALAHFQGKNNLLRRLNALKRADFSHHADRIRCPVQIICASDDLLVPSACSSELHAALPDSQKMVMRYGGHACNVTDPETFNALLLNGLASLLHHREAAL.

Belongs to the AB hydrolase superfamily. Hydrolase RutD family.

It carries out the reaction carbamate + 2 H(+) = NH4(+) + CO2. Functionally, involved in pyrimidine catabolism. May facilitate the hydrolysis of carbamate, a reaction that can also occur spontaneously. The polypeptide is Putative carbamate hydrolase RutD (Escherichia coli O139:H28 (strain E24377A / ETEC)).